A 452-amino-acid polypeptide reads, in one-letter code: Bifunctional protein GlmU (452 aa).

Residues M1–R226 are pyrophosphorylase. UDP-N-acetyl-alpha-D-glucosamine contacts are provided by residues L8–G11, K22, Q73, and G78–T79. D102 provides a ligand contact to Mg(2+). Residues G137, E151, N166, and N224 each contribute to the UDP-N-acetyl-alpha-D-glucosamine site. N224 is a binding site for Mg(2+). Residues L227–N247 form a linker region. The tract at residues G248–K452 is N-acetyltransferase. UDP-N-acetyl-alpha-D-glucosamine-binding residues include R330 and K348. Catalysis depends on H360, which acts as the Proton acceptor. The UDP-N-acetyl-alpha-D-glucosamine site is built by Y363 and N374. Residues A377, N383–Y384, S402, A420, and R437 each bind acetyl-CoA.

This sequence in the N-terminal section; belongs to the N-acetylglucosamine-1-phosphate uridyltransferase family. In the C-terminal section; belongs to the transferase hexapeptide repeat family. Homotrimer. Mg(2+) is required as a cofactor.

The protein resides in the cytoplasm. It catalyses the reaction alpha-D-glucosamine 1-phosphate + acetyl-CoA = N-acetyl-alpha-D-glucosamine 1-phosphate + CoA + H(+). It carries out the reaction N-acetyl-alpha-D-glucosamine 1-phosphate + UTP + H(+) = UDP-N-acetyl-alpha-D-glucosamine + diphosphate. The protein operates within nucleotide-sugar biosynthesis; UDP-N-acetyl-alpha-D-glucosamine biosynthesis; N-acetyl-alpha-D-glucosamine 1-phosphate from alpha-D-glucosamine 6-phosphate (route II): step 2/2. It functions in the pathway nucleotide-sugar biosynthesis; UDP-N-acetyl-alpha-D-glucosamine biosynthesis; UDP-N-acetyl-alpha-D-glucosamine from N-acetyl-alpha-D-glucosamine 1-phosphate: step 1/1. It participates in bacterial outer membrane biogenesis; LPS lipid A biosynthesis. Its function is as follows. Catalyzes the last two sequential reactions in the de novo biosynthetic pathway for UDP-N-acetylglucosamine (UDP-GlcNAc). The C-terminal domain catalyzes the transfer of acetyl group from acetyl coenzyme A to glucosamine-1-phosphate (GlcN-1-P) to produce N-acetylglucosamine-1-phosphate (GlcNAc-1-P), which is converted into UDP-GlcNAc by the transfer of uridine 5-monophosphate (from uridine 5-triphosphate), a reaction catalyzed by the N-terminal domain. The polypeptide is Bifunctional protein GlmU (Alteromonas mediterranea (strain DSM 17117 / CIP 110805 / LMG 28347 / Deep ecotype)).